The sequence spans 529 residues: Bifunctional purine biosynthesis protein PurH (529 aa).

An MGS-like domain is found at 1–148 (MQQPRPIRRA…KNHKDVAIVV (148 aa)).

The protein belongs to the PurH family.

It catalyses the reaction (6R)-10-formyltetrahydrofolate + 5-amino-1-(5-phospho-beta-D-ribosyl)imidazole-4-carboxamide = 5-formamido-1-(5-phospho-D-ribosyl)imidazole-4-carboxamide + (6S)-5,6,7,8-tetrahydrofolate. The catalysed reaction is IMP + H2O = 5-formamido-1-(5-phospho-D-ribosyl)imidazole-4-carboxamide. The protein operates within purine metabolism; IMP biosynthesis via de novo pathway; 5-formamido-1-(5-phospho-D-ribosyl)imidazole-4-carboxamide from 5-amino-1-(5-phospho-D-ribosyl)imidazole-4-carboxamide (10-formyl THF route): step 1/1. It participates in purine metabolism; IMP biosynthesis via de novo pathway; IMP from 5-formamido-1-(5-phospho-D-ribosyl)imidazole-4-carboxamide: step 1/1. This chain is Bifunctional purine biosynthesis protein PurH, found in Serratia proteamaculans (strain 568).